Consider the following 657-residue polypeptide: Glycogen debranching enzyme (657 aa).

Asp-336 functions as the Nucleophile in the catalytic mechanism. The active-site Proton donor is the Glu-371. The span at 458-467 shows a compositional bias: basic and acidic residues; sequence NEANGEENRD. The disordered stretch occupies residues 458–479; it reads NEANGEENRDGTNNNYSNNHGK.

Belongs to the glycosyl hydrolase 13 family.

It carries out the reaction Hydrolysis of (1-&gt;6)-alpha-D-glucosidic linkages to branches with degrees of polymerization of three or four glucose residues in limit dextrin.. It functions in the pathway glycan degradation; glycogen degradation. Functionally, removes maltotriose and maltotetraose chains that are attached by 1,6-alpha-linkage to the limit dextrin main chain, generating a debranched limit dextrin. The protein is Glycogen debranching enzyme of Shigella sonnei (strain Ss046).